Reading from the N-terminus, the 385-residue chain is Protein kup-1 (385 aa).

2 disordered regions span residues 1–20 (MDDE…VRED) and 326–385 (SLAS…PDEY). Basic and acidic residues-rich tracts occupy residues 8–20 (GSDH…VRED), 339–351 (RTDE…DDIV), and 364–385 (GRVE…PDEY).

The protein is Protein kup-1 (kup-1) of Caenorhabditis elegans.